The chain runs to 484 residues: ATP synthase subunit beta (484 aa).

An ATP-binding site is contributed by 162-169 (GGAGVGKT).

Belongs to the ATPase alpha/beta chains family. In terms of assembly, F-type ATPases have 2 components, CF(1) - the catalytic core - and CF(0) - the membrane proton channel. CF(1) has five subunits: alpha(3), beta(3), gamma(1), delta(1), epsilon(1). CF(0) has four main subunits: a(1), b(1), b'(1) and c(9-12).

The protein resides in the cellular thylakoid membrane. The enzyme catalyses ATP + H2O + 4 H(+)(in) = ADP + phosphate + 5 H(+)(out). Functionally, produces ATP from ADP in the presence of a proton gradient across the membrane. The catalytic sites are hosted primarily by the beta subunits. This Trichodesmium erythraeum (strain IMS101) protein is ATP synthase subunit beta.